The sequence spans 756 residues: Ent-kaurene synthase, chloroplastic (756 aa).

Residues aspartate 507 and aspartate 511 each contribute to the Mg(2+) site. A DDXXD motif motif is present at residues 507-511 (DDFFD). A helical transmembrane segment spans residues 606-622 (YVSFALGPIVLPCLYLV). Asparagine 651, threonine 655, and glutamate 659 together coordinate Mg(2+).

This sequence belongs to the terpene synthase family. It depends on Mg(2+) as a cofactor. In terms of tissue distribution, present in both leaves and flowers.

It localises to the plastid. Its subcellular location is the chloroplast membrane. It catalyses the reaction ent-copalyl diphosphate = ent-kaur-16-ene + diphosphate. Its pathway is plant hormone biosynthesis; gibberellin biosynthesis. Involved in the biosynthesis of labdane-type diterpenoid including marrubiin and other labdane-related furanoid diterpenoids with potential applications as anti-diabetics, analgesics or vasorelaxants. Terpene synthase that produces ent-kaurene from ent-copalyl diphosphate (ent-CPP). This chain is Ent-kaurene synthase, chloroplastic, found in Marrubium vulgare (White horehound).